A 178-amino-acid chain; its full sequence is Large ribosomal subunit protein uL5 (178 aa).

Belongs to the universal ribosomal protein uL5 family. In terms of assembly, part of the 50S ribosomal subunit; part of the 5S rRNA/L5/L18/L25 subcomplex. Contacts the 5S rRNA and the P site tRNA. Forms a bridge to the 30S subunit in the 70S ribosome.

This is one of the proteins that bind and probably mediate the attachment of the 5S RNA into the large ribosomal subunit, where it forms part of the central protuberance. In the 70S ribosome it contacts protein S13 of the 30S subunit (bridge B1b), connecting the 2 subunits; this bridge is implicated in subunit movement. Contacts the P site tRNA; the 5S rRNA and some of its associated proteins might help stabilize positioning of ribosome-bound tRNAs. The protein is Large ribosomal subunit protein uL5 of Aliivibrio fischeri (strain ATCC 700601 / ES114) (Vibrio fischeri).